A 261-amino-acid polypeptide reads, in one-letter code: Glucosamine-6-phosphate deaminase (261 aa).

Residue Asp67 is the Proton acceptor; for enolization step of the active site. Asp136 serves as the catalytic For ring-opening step. The active-site Proton acceptor; for ring-opening step is the His138. Catalysis depends on Glu143, which acts as the For ring-opening step.

This sequence belongs to the glucosamine/galactosamine-6-phosphate isomerase family. NagB subfamily.

The catalysed reaction is alpha-D-glucosamine 6-phosphate + H2O = beta-D-fructose 6-phosphate + NH4(+). The protein operates within amino-sugar metabolism; N-acetylneuraminate degradation; D-fructose 6-phosphate from N-acetylneuraminate: step 5/5. Catalyzes the reversible isomerization-deamination of glucosamine 6-phosphate (GlcN6P) to form fructose 6-phosphate (Fru6P) and ammonium ion. The chain is Glucosamine-6-phosphate deaminase from Streptomyces coelicolor (strain ATCC BAA-471 / A3(2) / M145).